Consider the following 404-residue polypeptide: UBP1-associated protein 2C (404 aa).

The disordered stretch occupies residues 1 to 29 (MDMMKKRKLDENGNGLNTNGGGTIGPTRL). RRM domains lie at 75 to 152 (RKLF…LAAS) and 167 to 248 (RKIY…GKKG). Disordered stretches follow at residues 246 to 270 (KKGGKPGMPQAQDGGSGHGHVHGEG) and 344 to 404 (GSGQ…PPNY).

Expressed in root apical and lateral meristems, young leaves and embryos.

It localises to the nucleus. Its function is as follows. Heterogeneous nuclear ribonucleoprotein (hnRNP)-like protein that acts as a component of a complex regulating the turnover of mRNAs in the nucleus. Binds with high affinity to RNA molecules that contain U-rich sequences in 3'-UTRs. May function in complex with UBP1 and contribute to the stabilization of mRNAs in the nucleus. The chain is UBP1-associated protein 2C (UBA2C) from Arabidopsis thaliana (Mouse-ear cress).